A 393-amino-acid chain; its full sequence is PGA synthase CapB (393 aa).

Mn(2+) is required as a cofactor.

Functionally, catalyzes the biosynthesis of PGA (gamma-polyglutamic acid) from L-glutamate. Both the 44-kDa and the 33-kDa forms are required for PGA synthesis. The sequence is that of PGA synthase CapB (capB) from Bacillus subtilis (strain 168).